The chain runs to 1122 residues: Desmoglein-2 (1122 aa).

Residues 1–28 (MARSPGDRCALLLLVQLLAVVCLDFGNG) form the signal peptide. Positions 29 to 54 (LHLEVFSPRNEGKPFPKHTHLVRQKR) are excised as a propeptide. Cadherin domains are found at residues 55–164 (AWIT…EPVF), 165–277 (TQEV…IPVV), 278–398 (ENKM…SSVV), and 397–504 (VVSF…CPVL). Residues 55-618 (AWITAPVALR…YDNYVGLGPA (564 aa)) lie on the Extracellular side of the membrane. A glycan (N-linked (GlcNAc...) asparagine) is linked at asparagine 117. N-linked (GlcNAc...) asparagine glycosylation is found at asparagine 314, asparagine 467, and asparagine 519. The helical transmembrane segment at 619–639 (AIALMILALLLLLLVPLLLLI) threads the bilayer. Topologically, residues 640–1122 (CHCGGGAKGF…KHSTMQHSYS (483 aa)) are cytoplasmic. Serine 685, serine 706, serine 709, and serine 729 each carry phosphoserine. Threonine 808 is modified (phosphothreonine). 3 positions are modified to phosphoserine: serine 810, serine 814, and serine 819. Desmoglein repeat repeat units follow at residues 885–916 (AYSS…ESSV), 917–945 (SSRQ…SYAK), 946–971 (GSAV…ERVY), 972–995 (APTS…ERVI), 996–1024 (QPNG…ERES), and 1025–1055 (ILAP…ERIL). Positions 913–932 (ESSVSSRQSQKVVPPPDPVA) are disordered. Residues 914-924 (SSVSSRQSQKV) show a composition bias toward low complexity. Residues 1089–1122 (LPNLDLEESDRPNSTITTSSTRVTKHSTMQHSYS) are disordered. Residues 1100 to 1122 (PNSTITTSSTRVTKHSTMQHSYS) show a composition bias toward polar residues. The residue at position 1122 (serine 1122) is a Phosphoserine.

Interacts with PKP2. Interacts with CTNNB1; the interaction promotes localization of CTNNB1 at cell junctions thus reducing its nuclear localization and subsequent transcription of CTNNB1/TCF-target genes. Post-translationally, palmitoylated by ZDHHC5 at the plasma membrane. As to expression, expressed in undifferentiated pluripotent stem cells, expression decreases during differentiation (at protein level). Expressed by embryonic stem cells, expression is reduced during differentiation (at protein level). Expressed at the apical-lateral cell membrane of kidney tubular epithelial cells (at protein level). Expressed in epidermis and heart (at protein level). Expressed in the brain, spleen, lung, liver skeletal muscle, kidney and testis.

Its subcellular location is the cell membrane. The protein localises to the cell junction. The protein resides in the desmosome. It localises to the cytoplasm. Its function is as follows. A component of desmosome cell-cell junctions which are required for positive regulation of cellular adhesion. Involved in the interaction of plaque proteins and intermediate filaments mediating cell-cell adhesion. Required for proliferation and viability of embryonic stem cells in the blastocyst, thereby crucial for progression of post-implantation embryonic development. Maintains pluripotency by regulating epithelial to mesenchymal transition/mesenchymal to epithelial transition (EMT/MET) via interacting with and sequestering CTNNB1 to sites of cell-cell contact, thereby reducing translocation of CTNNB1 to the nucleus and subsequent transcription of CTNNB1/TCF-target genes. Promotes pluripotency and the multi-lineage differentiation potential of hematopoietic stem cells. Plays a role in endothelial cell sprouting and elongation via mediating the junctional-association of cortical actin fibers and CDH5. Plays a role in limiting inflammatory infiltration and the apoptotic response to injury in kidney tubular epithelial cells, potentially via its role in maintaining cell-cell adhesion and the epithelial barrier. In Mus musculus (Mouse), this protein is Desmoglein-2 (Dsg2).